A 134-amino-acid polypeptide reads, in one-letter code: Cilia- and flagella-associated protein 144 (134 aa).

A disordered region spans residues 76–95 (QGPRKKYPETQTENQEVGWD).

It belongs to the CFAP144 family. As to quaternary structure, microtubule inner protein component of sperm flagellar doublet microtubules.

It is found in the cytoplasm. The protein localises to the cytoskeleton. The protein resides in the cilium axoneme. It localises to the flagellum axoneme. Microtubule inner protein (MIP) part of the dynein-decorated doublet microtubules (DMTs) in cilia axoneme, which is required for motile cilia beating. This chain is Cilia- and flagella-associated protein 144, found in Homo sapiens (Human).